Here is a 156-residue protein sequence, read N- to C-terminus: Ribosomal RNA large subunit methyltransferase H (156 aa).

S-adenosyl-L-methionine contacts are provided by residues leucine 73, glycine 104, and leucine 123 to leucine 128.

This sequence belongs to the RNA methyltransferase RlmH family. In terms of assembly, homodimer.

It is found in the cytoplasm. It carries out the reaction pseudouridine(1915) in 23S rRNA + S-adenosyl-L-methionine = N(3)-methylpseudouridine(1915) in 23S rRNA + S-adenosyl-L-homocysteine + H(+). In terms of biological role, specifically methylates the pseudouridine at position 1915 (m3Psi1915) in 23S rRNA. The chain is Ribosomal RNA large subunit methyltransferase H from Thiobacillus denitrificans (strain ATCC 25259 / T1).